We begin with the raw amino-acid sequence, 156 residues long: Small ribosomal subunit protein uS7 (156 aa).

Belongs to the universal ribosomal protein uS7 family. In terms of assembly, part of the 30S ribosomal subunit. Contacts proteins S9 and S11.

Its function is as follows. One of the primary rRNA binding proteins, it binds directly to 16S rRNA where it nucleates assembly of the head domain of the 30S subunit. Is located at the subunit interface close to the decoding center, probably blocks exit of the E-site tRNA. In Anaeromyxobacter dehalogenans (strain 2CP-C), this protein is Small ribosomal subunit protein uS7.